The sequence spans 463 residues: L-seryl-tRNA(Sec) selenium transferase (463 aa).

Lys295 is modified (N6-(pyridoxal phosphate)lysine).

Belongs to the SelA family. Homodecamer; pentamer of dimers. Binds only one seryl-tRNA(Sec) per dimer. Pyridoxal 5'-phosphate serves as cofactor.

Its subcellular location is the cytoplasm. The enzyme catalyses L-seryl-tRNA(Sec) + selenophosphate + H(+) = L-selenocysteinyl-tRNA(Sec) + phosphate. Its pathway is aminoacyl-tRNA biosynthesis; selenocysteinyl-tRNA(Sec) biosynthesis; selenocysteinyl-tRNA(Sec) from L-seryl-tRNA(Sec) (bacterial route): step 1/1. In terms of biological role, converts seryl-tRNA(Sec) to selenocysteinyl-tRNA(Sec) required for selenoprotein biosynthesis. This chain is L-seryl-tRNA(Sec) selenium transferase, found in Escherichia coli O139:H28 (strain E24377A / ETEC).